The primary structure comprises 165 residues: Pyruvoyl-dependent arginine decarboxylase 1 (165 aa).

At serine 45 the chain carries Pyruvic acid (Ser).

It belongs to the PdaD family. It depends on pyruvate as a cofactor.

It catalyses the reaction L-arginine + H(+) = agmatine + CO2. The polypeptide is Pyruvoyl-dependent arginine decarboxylase 1 (pdaD1) (Methanosarcina mazei (strain ATCC BAA-159 / DSM 3647 / Goe1 / Go1 / JCM 11833 / OCM 88) (Methanosarcina frisia)).